The following is a 216-amino-acid chain: Ethylene-inducing xylanase (216 aa).

The signal sequence occupies residues 1-19 (MVSFSSLFVAACAAVTAFA). Residues 28–216 (AITTSQQGTS…SSGSSDITVS (189 aa)) form the GH11 domain. Glu-112 serves as the catalytic Nucleophile. Glu-203 functions as the Proton donor in the catalytic mechanism.

It belongs to the glycosyl hydrolase 11 (cellulase G) family.

It is found in the secreted. It catalyses the reaction Endohydrolysis of (1-&gt;4)-beta-D-xylosidic linkages in xylans.. The protein operates within glycan degradation; xylan degradation. In terms of biological role, endo-1,4-beta-xylanase involved in the hydrolysis of xylan, a major structural heterogeneous polysaccharide found in plant biomass representing the second most abundant polysaccharide in the biosphere, after cellulose. Acts as a pathogen-associated molecular pattern (PAMP) that can trigger plant cell death. Triggers a series of immune responses in citrus fruit and enhanced the resistance of citrus and other fruit against fungal pathogens. This chain is Ethylene-inducing xylanase, found in Penicillium digitatum (strain Pd1 / CECT 20795) (Green mold).